The sequence spans 256 residues: Thiazole synthase (256 aa).

Lys95 (schiff-base intermediate with DXP) is an active-site residue. 1-deoxy-D-xylulose 5-phosphate-binding positions include Gly156, 182–183, and 204–205; these read AG and NT.

It belongs to the ThiG family. As to quaternary structure, homotetramer. Forms heterodimers with either ThiH or ThiS.

Its subcellular location is the cytoplasm. The enzyme catalyses [ThiS sulfur-carrier protein]-C-terminal-Gly-aminoethanethioate + 2-iminoacetate + 1-deoxy-D-xylulose 5-phosphate = [ThiS sulfur-carrier protein]-C-terminal Gly-Gly + 2-[(2R,5Z)-2-carboxy-4-methylthiazol-5(2H)-ylidene]ethyl phosphate + 2 H2O + H(+). It participates in cofactor biosynthesis; thiamine diphosphate biosynthesis. Its function is as follows. Catalyzes the rearrangement of 1-deoxy-D-xylulose 5-phosphate (DXP) to produce the thiazole phosphate moiety of thiamine. Sulfur is provided by the thiocarboxylate moiety of the carrier protein ThiS. In vitro, sulfur can be provided by H(2)S. In Escherichia coli O8 (strain IAI1), this protein is Thiazole synthase.